Here is an 82-residue protein sequence, read N- to C-terminus: Delta-actitoxin-Aeq2c (82 aa).

Residues 1–19 (MNRLMILVFAAVFLALASA) form the signal peptide. A propeptide spanning residues 20 to 26 (DEDVDIA) is cleaved from the precursor. 3 disulfide bridges follow: C32–C79, C34–C69, and C62–C80.

The protein belongs to the sea anemone sodium channel inhibitory toxin family. Type I subfamily.

It is found in the secreted. The protein localises to the nematocyst. Functionally, binds specifically to voltage-gated sodium channels (Nav), thereby delaying their inactivation during signal transduction. Causes death to crabs. The sequence is that of Delta-actitoxin-Aeq2c from Actinia equina (Beadlet anemone).